The chain runs to 254 residues: Alcohol dehydrogenase (254 aa).

10 to 33 (FVAGLGGIGLDTSREIVKSGPKNL) is an NAD(+) binding site. Position 138 (Ser-138) interacts with substrate. The active-site Proton acceptor is the Tyr-151.

It belongs to the short-chain dehydrogenases/reductases (SDR) family. In terms of assembly, homodimer.

The enzyme catalyses a primary alcohol + NAD(+) = an aldehyde + NADH + H(+). The catalysed reaction is a secondary alcohol + NAD(+) = a ketone + NADH + H(+). The chain is Alcohol dehydrogenase (Adh) from Drosophila differens (Fruit fly).